Here is a 341-residue protein sequence, read N- to C-terminus: L-threonine 3-dehydrogenase (341 aa).

A Zn(2+)-binding site is contributed by Cys38. Residues Thr40 and His43 each act as charge relay system in the active site. Zn(2+)-binding residues include His63, Glu64, Cys93, Cys96, Cys99, and Cys107. NAD(+)-binding positions include Ile175, Asp195, Arg200, 262-264 (LGI), and 286-287 (IY).

It belongs to the zinc-containing alcohol dehydrogenase family. Homotetramer. It depends on Zn(2+) as a cofactor.

It is found in the cytoplasm. The enzyme catalyses L-threonine + NAD(+) = (2S)-2-amino-3-oxobutanoate + NADH + H(+). Its pathway is amino-acid degradation; L-threonine degradation via oxydo-reductase pathway; glycine from L-threonine: step 1/2. Its function is as follows. Catalyzes the NAD(+)-dependent oxidation of L-threonine to 2-amino-3-ketobutyrate. The chain is L-threonine 3-dehydrogenase from Alteromonas mediterranea (strain DSM 17117 / CIP 110805 / LMG 28347 / Deep ecotype).